The sequence spans 132 residues: Small ribosomal subunit protein uS8 (132 aa).

It belongs to the universal ribosomal protein uS8 family. Part of the 30S ribosomal subunit. Contacts proteins S5 and S12.

Its function is as follows. One of the primary rRNA binding proteins, it binds directly to 16S rRNA central domain where it helps coordinate assembly of the platform of the 30S subunit. This chain is Small ribosomal subunit protein uS8, found in Staphylococcus epidermidis (strain ATCC 35984 / DSM 28319 / BCRC 17069 / CCUG 31568 / BM 3577 / RP62A).